The following is a 302-amino-acid chain: Recombination-associated protein RdgC (302 aa).

Belongs to the RdgC family.

It is found in the cytoplasm. The protein localises to the nucleoid. In terms of biological role, may be involved in recombination. The polypeptide is Recombination-associated protein RdgC (Xylella fastidiosa (strain M12)).